We begin with the raw amino-acid sequence, 310 residues long: Carbamate kinase 1 (310 aa).

It belongs to the carbamate kinase family.

Its subcellular location is the cytoplasm. The catalysed reaction is hydrogencarbonate + NH4(+) + ATP = carbamoyl phosphate + ADP + H2O + H(+). It functions in the pathway metabolic intermediate metabolism; carbamoyl phosphate degradation; CO(2) and NH(3) from carbamoyl phosphate: step 1/1. The chain is Carbamate kinase 1 (arcC1) from Staphylococcus aureus (strain MRSA252).